A 183-amino-acid polypeptide reads, in one-letter code: Ribosome maturation factor RimM (183 aa).

Positions 105-181 constitute a PRC barrel domain; it reads ANEYHLMDLI…RIEIDPPLGL (77 aa).

Belongs to the RimM family. Binds ribosomal protein uS19.

Its subcellular location is the cytoplasm. Its function is as follows. An accessory protein needed during the final step in the assembly of 30S ribosomal subunit, possibly for assembly of the head region. Essential for efficient processing of 16S rRNA. May be needed both before and after RbfA during the maturation of 16S rRNA. It has affinity for free ribosomal 30S subunits but not for 70S ribosomes. The protein is Ribosome maturation factor RimM of Thermosynechococcus vestitus (strain NIES-2133 / IAM M-273 / BP-1).